A 231-amino-acid chain; its full sequence is Sugar fermentation stimulation protein homolog (231 aa).

Belongs to the SfsA family.

The protein is Sugar fermentation stimulation protein homolog of Syntrophotalea carbinolica (strain DSM 2380 / NBRC 103641 / GraBd1) (Pelobacter carbinolicus).